The primary structure comprises 785 residues: Solute carrier family 45 member 4 (785 aa).

The tract at residues 1–43 (MKMAPQNADSESMQVQELPVPLPDPQKPRDPEAETQEETTSEG) is disordered. The next 6 helical transmembrane spans lie at 64 to 84 (EFCYAMETALVTPILLQIGLP), 87 to 107 (YYSLTWFLSPVLGLIFTPLIG), 124 to 144 (ILALCVGVLIGVALFLNGSAI), 156 to 176 (PIGIVLTVLGVVVLDFSADAT), 197 to 217 (LNIHAFSAGLGGAIGYVLGGL), and 234 to 254 (VLFFFAAVIFSVSVALHLFSI). 2 disordered regions span residues 259–309 (YSPQ…VQSE) and 401–430 (KVPNGRGSPPINSLSRSKVDLKPSVTSGSM). A phosphoserine mark is found at serine 442 and serine 472. A disordered region spans residues 478-505 (DLQQRQRSRHRNQSGATASSGDTESEEG). A compositionally biased stretch (low complexity) spans 490-499 (QSGATASSGD). Serine 502 is modified (phosphoserine). The next 6 membrane-spanning stretches (helical) occupy residues 525–545 (LMWLCLCHLLTWFSVIAEAVF), 577–597 (MGCWGLVIYAATGAICSALLQ), 609–629 (IIYMLGTLGFSVGTAVMAMFP), 631–651 (VYVAMVTISTMGVVSMSISYC), 683–703 (ILSCQVYISQILVASALGGVV), and 709–729 (IVVIPIVASVGSFLGFLTATF). Residues 741-772 (KEEQKGLSSGPAGEGEGGAGSEKPTVLKLSRK) form a disordered region. Residue serine 749 is modified to Phosphoserine.

The protein belongs to the glycoside-pentoside-hexuronide (GPH) cation symporter transporter (TC 2.A.2) family. As to expression, ubiquitously expressed.

It is found in the membrane. It carries out the reaction sucrose(out) + H(+)(out) = sucrose(in) + H(+)(in). Proton-associated sucrose transporter. May be able to transport also glucose and fructose. In Mus musculus (Mouse), this protein is Solute carrier family 45 member 4 (Slc45a4).